Reading from the N-terminus, the 524-residue chain is GMP synthase [glutamine-hydrolyzing] (524 aa).

Residues 7–196 (PVLVVDFGAQ…LHELAGIPAS (190 aa)) form the Glutamine amidotransferase type-1 domain. Cys84 functions as the Nucleophile in the catalytic mechanism. Residues His170 and Glu172 contribute to the active site. The GMPS ATP-PPase domain occupies 197–398 (WTPSNIADVL…LGLPEEIVAR (202 aa)). Residue 224–230 (SGGVDSA) coordinates ATP.

In terms of assembly, homodimer.

The catalysed reaction is XMP + L-glutamine + ATP + H2O = GMP + L-glutamate + AMP + diphosphate + 2 H(+). The protein operates within purine metabolism; GMP biosynthesis; GMP from XMP (L-Gln route): step 1/1. Functionally, catalyzes the synthesis of GMP from XMP. The protein is GMP synthase [glutamine-hydrolyzing] of Nocardia farcinica (strain IFM 10152).